Here is a 188-residue protein sequence, read N- to C-terminus: Trafficking protein particle complex subunit 5 (188 aa).

It belongs to the TRAPP small subunits family. BET3 subfamily. In terms of assembly, part of the multisubunit TRAPP (transport protein particle) complex.

It localises to the golgi apparatus. The protein localises to the cis-Golgi network. The protein resides in the endoplasmic reticulum. May play a role in vesicular transport from endoplasmic reticulum to Golgi. The chain is Trafficking protein particle complex subunit 5 (TRAPPC5) from Gallus gallus (Chicken).